Consider the following 75-residue polypeptide: UPF0346 protein LGAS_0911 (75 aa).

The protein belongs to the UPF0346 family.

This is UPF0346 protein LGAS_0911 from Lactobacillus gasseri (strain ATCC 33323 / DSM 20243 / BCRC 14619 / CIP 102991 / JCM 1131 / KCTC 3163 / NCIMB 11718 / NCTC 13722 / AM63).